The primary structure comprises 670 residues: tRNA 5-methylaminomethyl-2-thiouridine biosynthesis bifunctional protein MnmC (670 aa).

The tRNA (mnm(5)s(2)U34)-methyltransferase stretch occupies residues M1–I242. The segment at I269–E670 is FAD-dependent cmnm(5)s(2)U34 oxidoreductase.

This sequence in the N-terminal section; belongs to the methyltransferase superfamily. tRNA (mnm(5)s(2)U34)-methyltransferase family. It in the C-terminal section; belongs to the DAO family. The cofactor is FAD.

The protein localises to the cytoplasm. It carries out the reaction 5-aminomethyl-2-thiouridine(34) in tRNA + S-adenosyl-L-methionine = 5-methylaminomethyl-2-thiouridine(34) in tRNA + S-adenosyl-L-homocysteine + H(+). Functionally, catalyzes the last two steps in the biosynthesis of 5-methylaminomethyl-2-thiouridine (mnm(5)s(2)U) at the wobble position (U34) in tRNA. Catalyzes the FAD-dependent demodification of cmnm(5)s(2)U34 to nm(5)s(2)U34, followed by the transfer of a methyl group from S-adenosyl-L-methionine to nm(5)s(2)U34, to form mnm(5)s(2)U34. This chain is tRNA 5-methylaminomethyl-2-thiouridine biosynthesis bifunctional protein MnmC, found in Haemophilus influenzae (strain 86-028NP).